We begin with the raw amino-acid sequence, 341 residues long: Pyrophosphate--fructose 6-phosphate 1-phosphotransferase (341 aa).

G10 serves as a coordination point for diphosphate. Position 103 (E103) interacts with Mg(2+). Substrate is bound by residues T125–D127, R162, M169–R171, E221, R265, and H271–R274. D127 functions as the Proton acceptor in the catalytic mechanism.

Belongs to the phosphofructokinase type A (PFKA) family. Mixed-substrate PFK group III subfamily. As to quaternary structure, homodimer or homotetramer. Mg(2+) is required as a cofactor.

It is found in the cytoplasm. The enzyme catalyses beta-D-fructose 6-phosphate + diphosphate = beta-D-fructose 1,6-bisphosphate + phosphate + H(+). It functions in the pathway carbohydrate degradation; glycolysis; D-glyceraldehyde 3-phosphate and glycerone phosphate from D-glucose: step 3/4. With respect to regulation, non-allosteric. Functionally, catalyzes the phosphorylation of D-fructose 6-phosphate, the first committing step of glycolysis. Uses inorganic phosphate (PPi) as phosphoryl donor instead of ATP like common ATP-dependent phosphofructokinases (ATP-PFKs), which renders the reaction reversible, and can thus function both in glycolysis and gluconeogenesis. Consistently, PPi-PFK can replace the enzymes of both the forward (ATP-PFK) and reverse (fructose-bisphosphatase (FBPase)) reactions. The protein is Pyrophosphate--fructose 6-phosphate 1-phosphotransferase of Amycolatopsis mediterranei (strain S699) (Nocardia mediterranei).